A 741-amino-acid polypeptide reads, in one-letter code: Phosphoribosylformylglycinamidine synthase subunit PurL (741 aa).

Residue His54 is part of the active site. Residues Tyr57 and Lys98 each coordinate ATP. Glu100 is a Mg(2+) binding site. Residues 101–104 (SHNH) and Arg123 contribute to the substrate site. His102 acts as the Proton acceptor in catalysis. Asp124 lines the Mg(2+) pocket. Substrate is bound at residue Gln251. Asp279 provides a ligand contact to Mg(2+). 323–325 (ESQ) contacts substrate. 2 residues coordinate ATP: Asp510 and Gly547. A Mg(2+)-binding site is contributed by Asn548. Residue Ser550 coordinates substrate.

This sequence belongs to the FGAMS family. As to quaternary structure, monomer. Part of the FGAM synthase complex composed of 1 PurL, 1 PurQ and 2 PurS subunits.

It localises to the cytoplasm. It carries out the reaction N(2)-formyl-N(1)-(5-phospho-beta-D-ribosyl)glycinamide + L-glutamine + ATP + H2O = 2-formamido-N(1)-(5-O-phospho-beta-D-ribosyl)acetamidine + L-glutamate + ADP + phosphate + H(+). The protein operates within purine metabolism; IMP biosynthesis via de novo pathway; 5-amino-1-(5-phospho-D-ribosyl)imidazole from N(2)-formyl-N(1)-(5-phospho-D-ribosyl)glycinamide: step 1/2. Functionally, part of the phosphoribosylformylglycinamidine synthase complex involved in the purines biosynthetic pathway. Catalyzes the ATP-dependent conversion of formylglycinamide ribonucleotide (FGAR) and glutamine to yield formylglycinamidine ribonucleotide (FGAM) and glutamate. The FGAM synthase complex is composed of three subunits. PurQ produces an ammonia molecule by converting glutamine to glutamate. PurL transfers the ammonia molecule to FGAR to form FGAM in an ATP-dependent manner. PurS interacts with PurQ and PurL and is thought to assist in the transfer of the ammonia molecule from PurQ to PurL. This Picrophilus torridus (strain ATCC 700027 / DSM 9790 / JCM 10055 / NBRC 100828 / KAW 2/3) protein is Phosphoribosylformylglycinamidine synthase subunit PurL.